The primary structure comprises 817 residues: LPS-assembly protein LptD (817 aa).

The signal sequence occupies residues 1–26 (MPALVVSPDLVRGAAGASAAPTPAPA). Positions 1-101 (MPALVVSPDL…ARKPGSTEVR (101 aa)) are disordered. A compositionally biased stretch (low complexity) spans 13–90 (GAAGASAAPT…PAASASPADA (78 aa)).

Belongs to the LptD family. In terms of assembly, component of the lipopolysaccharide transport and assembly complex. Interacts with LptE and LptA.

The protein resides in the cell outer membrane. Its function is as follows. Together with LptE, is involved in the assembly of lipopolysaccharide (LPS) at the surface of the outer membrane. The polypeptide is LPS-assembly protein LptD (Azoarcus sp. (strain BH72)).